The primary structure comprises 58 residues: Large ribosomal subunit protein eL20 (58 aa).

Positions Thr37 to Ala58 are disordered. A compositionally biased stretch (basic and acidic residues) spans Pro48–Ala58.

Belongs to the eukaryotic ribosomal protein eL20 family. Part of the 50S ribosomal subunit. Binds 23S rRNA.

This chain is Large ribosomal subunit protein eL20, found in Halorubrum lacusprofundi (strain ATCC 49239 / DSM 5036 / JCM 8891 / ACAM 34).